We begin with the raw amino-acid sequence, 622 residues long: Low affinity potassium transport system protein Kup (622 aa).

The next 12 membrane-spanning stretches (helical) occupy residues Leu-9–Leu-29, Val-49–Leu-69, Val-103–Ile-123, Pro-137–Ile-157, Val-165–Leu-185, Val-213–Ala-233, Trp-247–Leu-267, Pro-276–Ala-296, Ile-337–Phe-357, Leu-363–Thr-383, Phe-396–Leu-416, and Leu-419–Thr-439.

This sequence belongs to the HAK/KUP transporter (TC 2.A.72) family.

The protein resides in the cell inner membrane. It carries out the reaction K(+)(in) + H(+)(in) = K(+)(out) + H(+)(out). Responsible for the low-affinity transport of potassium into the cell. Likely operates as a K(+):H(+) symporter. This chain is Low affinity potassium transport system protein Kup, found in Escherichia coli O6:K15:H31 (strain 536 / UPEC).